The chain runs to 141 residues: Hemoglobin subunit alpha (141 aa).

One can recognise a Globin domain in the interval V1–R141. Position 3 is a phosphoserine (S3). K7 carries the post-translational modification N6-succinyllysine. At T8 the chain carries Phosphothreonine. K11 is modified (N6-succinyllysine). K16 bears the N6-acetyllysine; alternate mark. K16 carries the N6-succinyllysine; alternate modification. Y24 is subject to Phosphotyrosine. Phosphoserine is present on S35. K40 is modified (N6-succinyllysine). S49 is modified (phosphoserine). Residue H58 participates in O2 binding. Residue H87 participates in heme b binding. Residue S102 is modified to Phosphoserine. T108 bears the Phosphothreonine mark. Phosphoserine is present on residues S124 and S131. A phosphothreonine mark is found at T134 and T137. S138 carries the phosphoserine modification.

The protein belongs to the globin family. As to quaternary structure, heterotetramer of two alpha chains and two beta chains. Red blood cells.

In terms of biological role, involved in oxygen transport from the lung to the various peripheral tissues. Hemopressin acts as an antagonist peptide of the cannabinoid receptor CNR1. Hemopressin-binding efficiently blocks cannabinoid receptor CNR1 and subsequent signaling. The polypeptide is Hemoglobin subunit alpha (HBA) (Semnopithecus entellus (Northern plains gray langur)).